The following is a 922-amino-acid chain: Autophagy-related protein 9B (922 aa).

Disordered regions lie at residues 1-22 and 85-144; these read MVRRTGWGGSRRQRGRWGDLGP and TPHN…MGPL. At 1–206 the chain is on the cytoplasmic side; that stretch reads MVRRTGWGGS…KIYSYHQRNG (206 aa). Residues 85-114 show a composition bias toward polar residues; the sequence is TPHNVLPTPTTPSTQAHPTMIHTSASPSWG. The span at 115-124 shows a compositional bias: low complexity; the sequence is SHSTPPLASA. A Tyrosine-based sorting signal motif is present at residues 150-153; it reads YERL. A helical transmembrane segment spans residues 207–227; that stretch reads FACILLEDVFQLGQFIFIVTF. The Lumenal segment spans residues 228–275; it reads TTFLLRCVDYNVLFNNQPKNHTRRGPLHSKVTLSDAILPSAQCAEKIH. A helical transmembrane segment spans residues 276-296; the sequence is DSPLLVFLLVLAAGFWLFQLL. Residues 297–437 are Cytoplasmic-facing; the sequence is RSVCNLFSYW…GVLANRWRRT (141 aa). An intramembrane segment occupies 438–458; the sequence is VLLLAAVNLALSPLVLAWQVL. Residues 459–523 lie on the Cytoplasmic side of the membrane; sequence HAFYSHVELL…RAAEPPAPLR (65 aa). A helical membrane pass occupies residues 524-544; that stretch reads ALLARQLVFFSGALFAALLVL. Residues 545 to 550 are Lumenal-facing; sequence TIYDED. The chain crosses the membrane as a helical span at residues 551–571; the sequence is VLAVEHVLTTMTALGVTATVA. The Cytoplasmic segment spans residues 572-624; the sequence is RSFIPEEQCQGRSSQLLLQAALAHMHYLPEEPGATGARASSYWQMAQLLQYRA. An intramembrane segment occupies 625–645; it reads VSLLEELLSPLLTPLFLLFWF. Residues 646-922 are Cytoplasmic-facing; the sequence is RPRALEIIDF…QKEPLTGPLH (277 aa). A disordered region spans residues 848 to 922; the sequence is ELWGEASASS…QKEPLTGPLH (75 aa). 2 stretches are compositionally biased toward low complexity: residues 854–870 and 877–889; these read SASSPSRPWSSPSQPGS and SWSSDGSSPASSP. Polar residues predominate over residues 890–899; that stretch reads RQQWGTQRAQ.

It belongs to the ATG9 family. In terms of assembly, homotrimer; forms a homotrimer with a central pore that forms a path between the two membrane leaflets. In terms of tissue distribution, expressed in heart, brain, and placenta and testis.

It is found in the preautophagosomal structure membrane. The catalysed reaction is a 1,2-diacyl-sn-glycero-3-phosphocholine(in) = a 1,2-diacyl-sn-glycero-3-phosphocholine(out). It carries out the reaction a 1,2-diacyl-sn-glycero-3-phospho-L-serine(in) = a 1,2-diacyl-sn-glycero-3-phospho-L-serine(out). It catalyses the reaction a 1,2-diacyl-sn-glycero-3-phosphoethanolamine(in) = a 1,2-diacyl-sn-glycero-3-phosphoethanolamine(out). Phospholipid scramblase involved in autophagy by mediating autophagosomal membrane expansion. Cycles between the preautophagosomal structure/phagophore assembly site (PAS) and the cytoplasmic vesicle pool and supplies membrane for the growing autophagosome. Lipid scramblase activity plays a key role in preautophagosomal structure/phagophore assembly by distributing the phospholipids that arrive through ATG2 (ATG2A or ATG2B) from the cytoplasmic to the luminal leaflet of the bilayer, thereby driving autophagosomal membrane expansion. In addition to autophagy, also plays a role in necrotic cell death. This is Autophagy-related protein 9B from Mus musculus (Mouse).